Reading from the N-terminus, the 364-residue chain is MGILEKISEIEKEIARTQKNKATEYHLGLLKAKLAKYRAQLLEPSKSASSKGEGFDVMKSGDARVALIGFPSVGKSTFLSLMTSTASEAASYEFTTLTCIPGVIEYKGANIQLLDLPGIIEGAAQGRGRGRQVIAVARTADVVVMMLDATKGDVQRSLLEKELESVGIRLNKHKPNIYFKPKKGGGISFNSTVTLTQCSEKLVQLILHEYKIFNAEVLFREDCSPDDFIDVIVGNRVYMPCLYVYNKIDQISMEEVDRLARKPNSVVISCGMKLNLDYLLEMLWEYLALTCIYTKKRGQRPDFTDAIILRKGASVEHVCHRIHRSLASQFKYALVWGTSTKYSPQRVGLTHTMEHEDVIQIVKK.

Lys-21 bears the (3S)-3-hydroxylysine mark. Positions 63 to 288 (ARVALIGFPS…LLEMLWEYLA (226 aa)) constitute an OBG-type G domain. GTP-binding positions include 69-76 (GFPSVGKS), 94-98 (FTTLT), 115-118 (DLPG), 246-249 (NKID), and 269-271 (SCG). Mg(2+) contacts are provided by Ser-76 and Thr-96. A TGS domain is found at 288-363 (ALTCIYTKKR…EHEDVIQIVK (76 aa)).

This sequence belongs to the TRAFAC class OBG-HflX-like GTPase superfamily. OBG GTPase family. Interacts with RWDD1; this interaction confers protection to polyubiquitination and proteolytic degradation. Interacts with JMJD7; this interaction is direct. Mg(2+) serves as cofactor. In terms of processing, polyubiquitinated. Hydroxylated (with S stereochemistry) at C-3 of Lys-21 by JMJD7. In terms of tissue distribution, fairly high levels in liver, heart, kidney, and brain. Very low levels in lung, spleen, testis and skeletal muscle.

It localises to the nucleus. It is found in the cytoplasm. The catalysed reaction is GTP + H2O = GDP + phosphate + H(+). Functionally, catalyzes the conversion of GTP to GDP through hydrolysis of the gamma-phosphate bond in GTP. When hydroxylated at C-3 of 'Lys-21' by JMJD7, may bind to RNA and play a role in translation. This is Developmentally-regulated GTP-binding protein 2 (Drg2) from Mus musculus (Mouse).